The sequence spans 367 residues: Dihydroorotate dehydrogenase (quinone) (367 aa).

FMN is bound by residues 67 to 71 (AGFDK) and Thr-91. A substrate-binding site is contributed by Lys-71. Residue 116–120 (NRLGF) participates in substrate binding. FMN is bound by residues Asn-145 and Asn-178. Residue Asn-178 coordinates substrate. The active-site Nucleophile is Ser-181. Substrate is bound at residue Asn-183. FMN is bound by residues Lys-219 and Thr-247. 248 to 249 (NT) contacts substrate. FMN-binding positions include Gly-269, Gly-298, and 319 to 320 (YT).

It belongs to the dihydroorotate dehydrogenase family. Type 2 subfamily. Monomer. It depends on FMN as a cofactor.

The protein resides in the cell membrane. The enzyme catalyses (S)-dihydroorotate + a quinone = orotate + a quinol. It functions in the pathway pyrimidine metabolism; UMP biosynthesis via de novo pathway; orotate from (S)-dihydroorotate (quinone route): step 1/1. Functionally, catalyzes the conversion of dihydroorotate to orotate with quinone as electron acceptor. The sequence is that of Dihydroorotate dehydrogenase (quinone) from Roseiflexus castenholzii (strain DSM 13941 / HLO8).